A 235-amino-acid polypeptide reads, in one-letter code: BPI fold-containing family A member 2 (235 aa).

The N-terminal stretch at 1-20 is a signal peptide; the sequence is MFQLGSLVVLCGLLIGTSES. C161 and C204 are oxidised to a cystine.

It belongs to the BPI/LBP/Plunc superfamily. Plunc family. In terms of tissue distribution, expressed in parotid, submandibular and sublingual glands.

The protein localises to the secreted. In terms of biological role, has strong antibacterial activity against P.aeruginosa. The sequence is that of BPI fold-containing family A member 2 (Bpifa2) from Rattus norvegicus (Rat).